The sequence spans 431 residues: UDP-N-acetylglucosamine 1-carboxyvinyltransferase (431 aa).

Residue 24 to 25 participates in phosphoenolpyruvate binding; it reads KN. Arg-95 is a binding site for UDP-N-acetyl-alpha-D-glucosamine. The active-site Proton donor is Asp-119. Residues Asp-314 and Met-336 each contribute to the UDP-N-acetyl-alpha-D-glucosamine site.

It belongs to the EPSP synthase family. MurA subfamily.

It is found in the cytoplasm. It catalyses the reaction phosphoenolpyruvate + UDP-N-acetyl-alpha-D-glucosamine = UDP-N-acetyl-3-O-(1-carboxyvinyl)-alpha-D-glucosamine + phosphate. The protein operates within cell wall biogenesis; peptidoglycan biosynthesis. In terms of biological role, cell wall formation. Adds enolpyruvyl to UDP-N-acetylglucosamine. In Bradyrhizobium diazoefficiens (strain JCM 10833 / BCRC 13528 / IAM 13628 / NBRC 14792 / USDA 110), this protein is UDP-N-acetylglucosamine 1-carboxyvinyltransferase.